Here is a 545-residue protein sequence, read N- to C-terminus: Monocarboxylate transporter 8 (545 aa).

Residues 1–98 (MALPSPASEE…VETRGTARGF (98 aa)) form a disordered region. An N-acetylalanine modification is found at A2. The Cytoplasmic segment spans residues 2–102 (ALPSPASEEA…GTARGFQPPE (101 aa)). 2 repeat units span residues 29-50 (PVPE…PVPV) and 51-72 (PPPE…PLPV). The segment at 29–72 (PVPEPEPEPEPEPEPEPEPVPVPPPEPQPEPEPQPLPDPAPLPV) is 2 X 22 AA approximate tandem repeats. Acidic residues predominate over residues 33–45 (PEPEPEPEPEPEP). Residues 46 to 70 (EPVPVPPPEPQPEPEPQPLPDPAPL) show a composition bias toward pro residues. The helical transmembrane segment at 103 to 123 (GGFGWIVVFAATWCNGSIFGI) threads the bilayer. At 124-149 (HNSVGILYSMLLEEEKEKNRQVEFQA) the chain is on the extracellular side. A helical membrane pass occupies residues 150-170 (AWVGALAMGMIFFCSPIVSIF). Topologically, residues 171-181 (TDRLGCRITAT) are cytoplasmic. A helical transmembrane segment spans residues 182-202 (TGAAVAFIGLHTSSFTSSLSL). Over 203 to 204 (RY) the chain is Extracellular. Residues 205-225 (FTYGILFGCGCSFAFQPSLVI) traverse the membrane as a helical segment. The Cytoplasmic segment spans residues 226–235 (LGHYFQRRLG). A helical transmembrane segment spans residues 236–256 (LANGVVSAGSSIFSMSFPFLI). Topologically, residues 257–264 (KMLGDRIK) are extracellular. The helical transmembrane segment at 265–285 (LAQTFQVLSTFMFVLTLLSLT) threads the bilayer. Topologically, residues 286-328 (YRPLLPSSQDTPSKRGAHTLRQRFLVQFRKYFNMRVFRQRTYR) are cytoplasmic. Residues 329–349 (IWAFGIAAAALGYFVPYVHLM) form a helical membrane-spanning segment. Residues 350 to 362 (KYVEDKFKEIKET) are Extracellular-facing. The chain crosses the membrane as a helical span at residues 363 to 383 (WVLLVCIGATSGLGRLVSGHI). Over 384–392 (SDSIPGLKK) the chain is Cytoplasmic. The chain crosses the membrane as a helical span at residues 393-413 (IYLQVLSFLLLGLMSMMIPLC). Topologically, residues 414 to 415 (RD) are extracellular. A helical membrane pass occupies residues 416–436 (FGGLIVVCLFLGLCDGFFITI). Over 437 to 453 (MAPIAFELVGPMQASQA) the chain is Cytoplasmic. Residues 454–474 (IGYLLGMMALPMIAGPPIAGL) form a helical membrane-spanning segment. The Extracellular segment spans residues 475–483 (LRNCFGNYH). A helical transmembrane segment spans residues 484-504 (VAFYFAGVPPIIGAVILFFVP). The Cytoplasmic segment spans residues 505 to 545 (LMHQRMFKKEQRESSKDKMLSHDPDPNGELLPGSPTPEEPI). Residues 514–529 (EQRESSKDKMLSHDPD) are compositionally biased toward basic and acidic residues. The segment at 514–545 (EQRESSKDKMLSHDPDPNGELLPGSPTPEEPI) is disordered. T540 is modified (phosphothreonine).

The protein belongs to the major facilitator superfamily. Monocarboxylate porter (TC 2.A.1.13) family. Monomer. Homodimer. Homooligomer. Expressed at highest levels in liver, lower levels in brain, kidney and heart (at protein level). Expressed in microvessels of the blood-brain barrier (BBB) (at protein level).

The protein resides in the cell membrane. The protein localises to the apical cell membrane. It carries out the reaction 3,3',5-triiodo-L-thyronine(out) = 3,3',5-triiodo-L-thyronine(in). The catalysed reaction is 3,3',5'-triiodo-L-thyronine(out) = 3,3',5'-triiodo-L-thyronine(in). The enzyme catalyses L-thyroxine(out) = L-thyroxine(in). It catalyses the reaction 3,3'-diiodo-L-thyronine(out) = 3,3'-diiodo-L-thyronine(in). Specific thyroid hormone transmembrane transporter, that mediates both uptake and efflux of thyroid hormone across the cell membrane independently of pH or a Na(+) gradient. Major substrates are the iodothyronines T3 and T4 and to a lesser extent rT3 and 3,3-diiodothyronine (3,3'-T2). Acts as an important mediator of thyroid hormone transport, especially T3, through the blood-brain barrier. The polypeptide is Monocarboxylate transporter 8 (SLC16A2) (Rattus norvegicus (Rat)).